The chain runs to 157 residues: Protein Smg homolog (157 aa).

The protein belongs to the Smg family.

This Shewanella denitrificans (strain OS217 / ATCC BAA-1090 / DSM 15013) protein is Protein Smg homolog.